The sequence spans 341 residues: Glyceraldehyde-3-phosphate dehydrogenase, cytosolic (341 aa).

NAD(+) contacts are provided by residues 14 to 15 (RI) and Asp36. Residues 153 to 155 (SCT), Thr184, 213 to 214 (TG), and Arg236 each bind D-glyceraldehyde 3-phosphate. Residue Cys154 is the Nucleophile of the active site. NAD(+) is bound at residue Asn318.

It belongs to the glyceraldehyde-3-phosphate dehydrogenase family. As to quaternary structure, homotetramer.

The protein resides in the cytoplasm. The enzyme catalyses D-glyceraldehyde 3-phosphate + phosphate + NAD(+) = (2R)-3-phospho-glyceroyl phosphate + NADH + H(+). It participates in carbohydrate degradation; glycolysis; pyruvate from D-glyceraldehyde 3-phosphate: step 1/5. Functionally, key enzyme in glycolysis that catalyzes the first step of the pathway by converting D-glyceraldehyde 3-phosphate (G3P) into 3-phospho-D-glyceroyl phosphate. Essential for the maintenance of cellular ATP levels and carbohydrate metabolism. The sequence is that of Glyceraldehyde-3-phosphate dehydrogenase, cytosolic (GAPC) from Chlamydomonas reinhardtii (Chlamydomonas smithii).